The chain runs to 255 residues: Methylthioribulose-1-phosphate dehydratase (255 aa).

Cysteine 98 contacts substrate. Histidine 116 and histidine 118 together coordinate Zn(2+). Glutamate 150 (proton donor/acceptor) is an active-site residue. Residue histidine 207 participates in Zn(2+) binding.

The protein belongs to the aldolase class II family. MtnB subfamily. Zn(2+) is required as a cofactor.

Its subcellular location is the cytoplasm. The catalysed reaction is 5-(methylsulfanyl)-D-ribulose 1-phosphate = 5-methylsulfanyl-2,3-dioxopentyl phosphate + H2O. The protein operates within amino-acid biosynthesis; L-methionine biosynthesis via salvage pathway; L-methionine from S-methyl-5-thio-alpha-D-ribose 1-phosphate: step 2/6. Functionally, catalyzes the dehydration of methylthioribulose-1-phosphate (MTRu-1-P) into 2,3-diketo-5-methylthiopentyl-1-phosphate (DK-MTP-1-P). This chain is Methylthioribulose-1-phosphate dehydratase, found in Pyricularia oryzae (strain 70-15 / ATCC MYA-4617 / FGSC 8958) (Rice blast fungus).